A 101-amino-acid polypeptide reads, in one-letter code: Apolipoprotein C-II (101 aa).

A signal peptide spans 1 to 22; it reads MGTRFLLALCLVLLVLGFEVQG. The lipid binding stretch occupies residues 66 to 74; it reads AVDEKLRDL. The lipoprotein lipase cofactor stretch occupies residues 78-101; that stretch reads STAAMSTYTGIFTDQVLSVLKGEE.

Belongs to the apolipoprotein C2 family. In terms of processing, proapolipoprotein C-II is synthesized as a sialic acid containing glycoprotein which is subsequently desialylated prior to its proteolytic processing. Post-translationally, proapolipoprotein C-II, the major form found in plasma undergoes proteolytic cleavage of its N-terminal hexapeptide to generate apolipoprotein C-II, which occurs as the minor form in plasma.

The protein localises to the secreted. Component of chylomicrons, very low-density lipoproteins (VLDL), low-density lipoproteins (LDL), and high-density lipoproteins (HDL) in plasma. Plays an important role in lipoprotein metabolism as an activator of lipoprotein lipase. Both proapolipoprotein C-II and apolipoprotein C-II can activate lipoprotein lipase. This Colobus guereza (Mantled guereza) protein is Apolipoprotein C-II (APOC2).